The primary structure comprises 279 residues: Virginiamycin B lyase (279 aa).

Position 215 (H215) interacts with substrate. E253 serves as a coordination point for Mg(2+). The active-site Proton acceptor is H255. E270 contacts Mg(2+).

The protein belongs to the Vgb family. As to quaternary structure, monomer. Requires Mg(2+) as cofactor.

In terms of biological role, inactivates the type B streptogramin antibiotics by linearizing the lactone ring at the ester linkage, generating a free phenylglycine carboxylate and converting the threonyl moiety into 2-amino-butenoic acid. In Nocardia farcinica (strain IFM 10152), this protein is Virginiamycin B lyase.